Consider the following 110-residue polypeptide: MKFVLLFGVLLVTLFSYSSAEMLDDFDQADEDELLSLIEKEEARKDRIPKHHECTSNKHGCCRGHLFKYKCQCTTVVTQSGEETERCFCGTPPHHKAAELVVGFGKKIFG.

An N-terminal signal peptide occupies residues 1 to 20 (MKFVLLFGVLLVTLFSYSSA). A propeptide spanning residues 21-44 (EMLDDFDQADEDELLSLIEKEEAR) is cleaved from the precursor. Disulfide bonds link Cys54/Cys71, Cys61/Cys89, and Cys73/Cys87.

It belongs to the neurotoxin 19 (CSTX) family. 03 subfamily. Expressed by the venom gland.

Its subcellular location is the secreted. The chain is U1-lycotoxin-Ls1gg from Lycosa singoriensis (Wolf spider).